We begin with the raw amino-acid sequence, 320 residues long: G-protein coupled receptor homolog FPV021 (320 aa).

Topologically, residues 1-18 (MDTDYGTVHTQQSVKGNT) are extracellular. Residues 19–39 (LILLIYFISFIVGFPGNCTVI) form a helical membrane-spanning segment. The Cytoplasmic segment spans residues 40-52 (WFTGYRWKKSVTT). Residues 53-73 (IWFLNLAIADTLFVIFIPFEI) form a helical membrane-spanning segment. The Extracellular segment spans residues 74–91 (TYILMGHYWPFGLFVCRI). A disulfide bond links Cys89 and Cys167. A helical transmembrane segment spans residues 92–112 (GSLMFNTGMYASIFFLTFISI). Residues 113–133 (DRYCLAFRRDICNKYRYRINI) lie on the Cytoplasmic side of the membrane. Residues 134 to 154 (MVMIIISWIISILLSTPYMYF) traverse the membrane as a helical segment. Topologically, residues 155 to 188 (KNTNEKYRNNRDCLEDYHSDNNTYLLRRVVFCIS) are extracellular. N-linked (GlcNAc...) asparagine; by host glycosylation is present at Asn175. A helical transmembrane segment spans residues 189–209 (LVMRYLVPSVVMLFCYCLLLF). Topologically, residues 210-222 (KHSLFLSKGQTYT) are cytoplasmic. The chain crosses the membrane as a helical span at residues 223–243 (IVIMITSFMVLWTPYNILYFI). The Extracellular segment spans residues 244–260 (DVIGSHYYNADTIIDAA). The chain crosses the membrane as a helical span at residues 261–281 (PISISLIFLSSSINPMIYMLV). Residues 282 to 320 (GRYVSFENYSMRESLKLILSEERDNQTNHENEIKMENIN) lie on the Cytoplasmic side of the membrane.

Belongs to the G-protein coupled receptor 1 family.

The protein resides in the host cell membrane. This is G-protein coupled receptor homolog FPV021 from Vertebrata (FPV).